Reading from the N-terminus, the 257-residue chain is Deoxyribose-phosphate aldolase (257 aa).

Catalysis depends on aspartate 102, which acts as the Proton donor/acceptor. Residue lysine 166 is the Schiff-base intermediate with acetaldehyde of the active site. Lysine 198 serves as the catalytic Proton donor/acceptor.

This sequence belongs to the DeoC/FbaB aldolase family. DeoC type 2 subfamily.

It localises to the cytoplasm. The catalysed reaction is 2-deoxy-D-ribose 5-phosphate = D-glyceraldehyde 3-phosphate + acetaldehyde. Its pathway is carbohydrate degradation; 2-deoxy-D-ribose 1-phosphate degradation; D-glyceraldehyde 3-phosphate and acetaldehyde from 2-deoxy-alpha-D-ribose 1-phosphate: step 2/2. Its function is as follows. Catalyzes a reversible aldol reaction between acetaldehyde and D-glyceraldehyde 3-phosphate to generate 2-deoxy-D-ribose 5-phosphate. This Aeromonas hydrophila subsp. hydrophila (strain ATCC 7966 / DSM 30187 / BCRC 13018 / CCUG 14551 / JCM 1027 / KCTC 2358 / NCIMB 9240 / NCTC 8049) protein is Deoxyribose-phosphate aldolase.